A 110-amino-acid chain; its full sequence is Large ribosomal subunit protein uL22 (110 aa).

It belongs to the universal ribosomal protein uL22 family. In terms of assembly, part of the 50S ribosomal subunit.

Functionally, this protein binds specifically to 23S rRNA; its binding is stimulated by other ribosomal proteins, e.g. L4, L17, and L20. It is important during the early stages of 50S assembly. It makes multiple contacts with different domains of the 23S rRNA in the assembled 50S subunit and ribosome. The globular domain of the protein is located near the polypeptide exit tunnel on the outside of the subunit, while an extended beta-hairpin is found that lines the wall of the exit tunnel in the center of the 70S ribosome. The sequence is that of Large ribosomal subunit protein uL22 from Photorhabdus laumondii subsp. laumondii (strain DSM 15139 / CIP 105565 / TT01) (Photorhabdus luminescens subsp. laumondii).